Reading from the N-terminus, the 95-residue chain is Aspartyl/glutamyl-tRNA(Asn/Gln) amidotransferase subunit C (95 aa).

It belongs to the GatC family. As to quaternary structure, heterotrimer of A, B and C subunits.

It carries out the reaction L-glutamyl-tRNA(Gln) + L-glutamine + ATP + H2O = L-glutaminyl-tRNA(Gln) + L-glutamate + ADP + phosphate + H(+). The enzyme catalyses L-aspartyl-tRNA(Asn) + L-glutamine + ATP + H2O = L-asparaginyl-tRNA(Asn) + L-glutamate + ADP + phosphate + 2 H(+). Allows the formation of correctly charged Asn-tRNA(Asn) or Gln-tRNA(Gln) through the transamidation of misacylated Asp-tRNA(Asn) or Glu-tRNA(Gln) in organisms which lack either or both of asparaginyl-tRNA or glutaminyl-tRNA synthetases. The reaction takes place in the presence of glutamine and ATP through an activated phospho-Asp-tRNA(Asn) or phospho-Glu-tRNA(Gln). The sequence is that of Aspartyl/glutamyl-tRNA(Asn/Gln) amidotransferase subunit C from Pelobacter propionicus (strain DSM 2379 / NBRC 103807 / OttBd1).